The chain runs to 347 residues: Phenylalanine--tRNA ligase alpha subunit (347 aa).

A Mg(2+)-binding site is contributed by glutamate 265.

The protein belongs to the class-II aminoacyl-tRNA synthetase family. Phe-tRNA synthetase alpha subunit type 1 subfamily. Tetramer of two alpha and two beta subunits. The cofactor is Mg(2+).

It localises to the cytoplasm. It carries out the reaction tRNA(Phe) + L-phenylalanine + ATP = L-phenylalanyl-tRNA(Phe) + AMP + diphosphate + H(+). The polypeptide is Phenylalanine--tRNA ligase alpha subunit (Mycolicibacterium gilvum (strain PYR-GCK) (Mycobacterium gilvum (strain PYR-GCK))).